We begin with the raw amino-acid sequence, 499 residues long: Endoglucanase (499 aa).

Residues 1–29 (MKRSISIFITCLLITLLTMGGMLASPASA) form the signal peptide. Residues histidine 65, 69 to 70 (WY), tyrosine 96, and histidine 131 contribute to the substrate site. Glutamate 169 (proton donor) is an active-site residue. A substrate-binding site is contributed by tyrosine 231. Glutamate 257 serves as the catalytic Nucleophile. Residues 263–264 (AS), tryptophan 291, and 296–298 (KQE) contribute to the substrate site. The CBM3 domain occupies 350-499 (QENGISVQYR…GKLIWGTEPN (150 aa)).

It belongs to the glycosyl hydrolase 5 (cellulase A) family.

The catalysed reaction is Endohydrolysis of (1-&gt;4)-beta-D-glucosidic linkages in cellulose, lichenin and cereal beta-D-glucans.. In Bacillus subtilis, this protein is Endoglucanase (bglC).